The primary structure comprises 156 residues: Mitochondrial intermembrane space cysteine motif-containing protein MIX17 (156 aa).

Residues 1-21 (MARSRGSSRPISRSRPTQTRS) constitute a mitochondrion transit peptide. Low complexity predominate over residues 1-21 (MARSRGSSRPISRSRPTQTRS). Disordered regions lie at residues 1–50 (MARS…GAQT) and 78–110 (AGIT…QTQT). Over residues 84 to 110 (FSGSGSDSAPVEQQQQNMANTSGQTQT) the composition is skewed to polar residues. The 42-residue stretch at 115–156 (GRTCEIDARNFTRCLDENNGNFQICDYYLQQLKACQEAARQY) folds into the CHCH domain. A Cx9C motif motif is present at residues 118–128 (CEIDARNFTRC). Disulfide bonds link Cys-118-Cys-149 and Cys-128-Cys-139.

It is found in the mitochondrion intermembrane space. This Saccharomyces cerevisiae (strain ATCC 204508 / S288c) (Baker's yeast) protein is Mitochondrial intermembrane space cysteine motif-containing protein MIX17 (MIX17).